The following is a 226-amino-acid chain: Uracil-DNA glycosylase (226 aa).

D64 serves as the catalytic Proton acceptor.

Belongs to the uracil-DNA glycosylase (UDG) superfamily. UNG family.

The protein resides in the cytoplasm. The enzyme catalyses Hydrolyzes single-stranded DNA or mismatched double-stranded DNA and polynucleotides, releasing free uracil.. In terms of biological role, excises uracil residues from the DNA which can arise as a result of misincorporation of dUMP residues by DNA polymerase or due to deamination of cytosine. The chain is Uracil-DNA glycosylase from Vibrio campbellii (strain ATCC BAA-1116).